An 81-amino-acid chain; its full sequence is Sulfur carrier protein TusA (81 aa).

Cys-19 (cysteine persulfide intermediate) is an active-site residue.

It belongs to the sulfur carrier protein TusA family.

The protein resides in the cytoplasm. In terms of biological role, sulfur carrier protein which probably makes part of a sulfur-relay system. The protein is Sulfur carrier protein TusA of Shewanella sp. (strain ANA-3).